A 361-amino-acid chain; its full sequence is Dynein axonemal assembly factor 8 (361 aa).

Disordered regions lie at residues 65–191 and 309–334; these read DPAG…ERRK and AQPG…RRPL. Polar residues predominate over residues 136-157; it reads TLNTSASQSPRQGPQGEATRSP. S142 and S144 each carry phosphoserine. The segment covering 321-334 has biased composition (low complexity); that stretch reads GSSSSSGHLGRRPL.

The protein resides in the dynein axonemal particle. The protein localises to the cytoplasm. In terms of biological role, in cyliated cells, dynein axonemal particle-specific protein required for deployment of ODA to the axoneme. Interacts with outer dynein arm (ODA) subunits. In Bos taurus (Bovine), this protein is Dynein axonemal assembly factor 8 (DNAAF8).